A 103-amino-acid chain; its full sequence is O2 contryphan Vc1 (103 aa).

A signal peptide spans 1–23 (MGKLTILFLVAAALLSTQVMVQG). Residues 24–67 (DGAHERTEAEEPQHHGAKRQDGTGGYPVDDVDMMQRIFRTPLKR) constitute a propeptide that is removed on maturation. Basic and acidic residues predominate over residues 25 to 44 (GAHERTEAEEPQHHGAKRQD). Positions 25–50 (GAHERTEAEEPQHHGAKRQDGTGGYP) are disordered. Q68 is modified (pyrrolidone carboxylic acid). Residues C70 and C83 are joined by a disulfide bond. Positions 99–103 (RRGRQ) are excised as a propeptide.

This sequence belongs to the O2 superfamily. Post-translationally, pyrrolidone carboxylic acid at position 1 has no significant effect on the structure of contryphan-Vc1. Expressed by the venom gland.

It localises to the secreted. In terms of biological role, unknown. Intracranial injection of the peptide into mice does not produce toxic effects. In addition, the peptide does not produce any observable changes to normal or depolarization-induced intracellular calcium levels in mouse dorsal root ganglion cells. In Conus victoriae (Queen Victoria cone), this protein is O2 contryphan Vc1.